Here is a 186-residue protein sequence, read N- to C-terminus: Putative manganese efflux pump MntP (186 aa).

The next 6 helical transmembrane spans lie at Met-1–Ser-21, Leu-39–Ser-59, Val-61–Gly-81, Tyr-102–Ser-122, Val-134–Gly-156, and Ile-165–Trp-185.

Belongs to the MntP (TC 9.B.29) family.

It localises to the cell membrane. In terms of biological role, probably functions as a manganese efflux pump. The polypeptide is Putative manganese efflux pump MntP (Methanosarcina acetivorans (strain ATCC 35395 / DSM 2834 / JCM 12185 / C2A)).